A 496-amino-acid polypeptide reads, in one-letter code: Nectin 1a (496 aa).

Residues 1–20 (MMFINLLLRLMCVFLIGADG) form the signal peptide. The Extracellular portion of the chain corresponds to 21–349 (QMVQMESSKA…FQDQQQAGVV (329 aa)). The region spanning 34 to 138 (GSQVELPCQF…GNRENMVNLT (105 aa)) is the Ig-like V-type domain. Cys-41 and Cys-121 are oxidised to a cystine. N-linked (GlcNAc...) asparagine glycosylation is found at Asn-62 and Asn-136. 2 consecutive Ig-like C2-type domains span residues 143-238 (PMIQ…VTLN) and 243-330 (PEVI…VIVT). Intrachain disulfides connect Cys-168–Cys-222 and Cys-265–Cys-312. Asn-282 is a glycosylation site (N-linked (GlcNAc...) asparagine). The helical transmembrane segment at 350–370 (IGGAVVCGTVLLAAVTLLVVF) threads the bilayer. Residues 371–496 (LYRRRCMFKG…SVISKEEWYV (126 aa)) lie on the Cytoplasmic side of the membrane.

Belongs to the nectin family. As to quaternary structure, cis- and trans-homodimer. Can form trans-heterodimers. In terms of tissue distribution, expressed in the developing eye and nervous system.

It localises to the cell membrane. The protein resides in the cell junction. Its subcellular location is the adherens junction. In terms of biological role, cell adhesion molecule that promotes cell-cell contacts and plays important roles in the development of the nervous system. Acts by forming homophilic or heterophilic trans-dimers. This Danio rerio (Zebrafish) protein is Nectin 1a.